The following is a 203-amino-acid chain: Calcineurin B-like protein 5 (203 aa).

A lipid anchor (N-myristoyl glycine) is attached at glycine 2. 4 consecutive EF-hand domains span residues 30-65 (EVEV…KNTK), 66-101 (KRSL…FHPN), 103-138 (SPRD…VLEE), and 147-182 (IIDS…YPLT).

Belongs to the calcineurin regulatory subunit family. As to quaternary structure, homodimer. Interacts with PP2CA, CIPK2, CIPK11, CIPK23 and CIPK24. Post-translationally, both N-myristoylation and calcium-mediated conformational changes are essential for its function. Expressed in green tissues, but not in the roots.

Its subcellular location is the cytoplasm. It is found in the nucleus. Functionally, acts as a calcium sensor. CBL proteins interact with CIPK serine-threonine protein kinases. Binding of a CBL protein to the regulatory NAF domain of a CIPK protein lead to the activation of the kinase in a calcium-dependent manner. May function as a positive regulator of salt or drought responses. This Arabidopsis thaliana (Mouse-ear cress) protein is Calcineurin B-like protein 5 (CBL5).